Here is a 282-residue protein sequence, read N- to C-terminus: Ribosomal RNA small subunit methyltransferase I (282 aa).

Belongs to the methyltransferase superfamily. RsmI family.

It localises to the cytoplasm. It carries out the reaction cytidine(1402) in 16S rRNA + S-adenosyl-L-methionine = 2'-O-methylcytidine(1402) in 16S rRNA + S-adenosyl-L-homocysteine + H(+). Catalyzes the 2'-O-methylation of the ribose of cytidine 1402 (C1402) in 16S rRNA. The sequence is that of Ribosomal RNA small subunit methyltransferase I from Pseudomonas aeruginosa (strain ATCC 15692 / DSM 22644 / CIP 104116 / JCM 14847 / LMG 12228 / 1C / PRS 101 / PAO1).